A 608-amino-acid polypeptide reads, in one-letter code: Protein transport protein SEC9 (608 aa).

2 disordered regions span residues 1–23 (MGFK…SMQD) and 50–307 (VTQK…QTAA). Over residues 9–21 (KKDPTESEIRESM) the composition is skewed to basic and acidic residues. 2 stretches are compositionally biased toward low complexity: residues 54-67 (SSAA…NPYA) and 74-85 (SGGNPYAAAAAG). The segment covering 100–121 (NGGGGNGGSNSNGGSNSNGGSN) has biased composition (gly residues). The segment covering 122-134 (GSPYKMNNGGNNA) has biased composition (low complexity). The segment covering 169–183 (SKKEEAPPPLEDPRL) has biased composition (basic and acidic residues). Acidic residues predominate over residues 198-215 (ERDDYEPVYDVGLPEEPE). A compositionally biased stretch (basic and acidic residues) spans 241 to 260 (NVDRELEEDKTALFGPRDDP). Residues 390–452 (RFTKQQSAAS…KIAEDKAKEL (63 aa)) enclose the t-SNARE coiled-coil homology 1 domain. The segment at 514–533 (GEKSKHRKEMMSKYGSRPGR) is disordered. Residues 545–607 (DILEDEIDNN…HLNTARLAGI (63 aa)) enclose the t-SNARE coiled-coil homology 2 domain.

It belongs to the SNAP-25 family.

This Yarrowia lipolytica (strain CLIB 122 / E 150) (Yeast) protein is Protein transport protein SEC9 (SEC9).